We begin with the raw amino-acid sequence, 460 residues long: Argininosuccinate lyase (460 aa).

It belongs to the lyase 1 family. Argininosuccinate lyase subfamily.

It localises to the cytoplasm. It carries out the reaction 2-(N(omega)-L-arginino)succinate = fumarate + L-arginine. It functions in the pathway amino-acid biosynthesis; L-arginine biosynthesis; L-arginine from L-ornithine and carbamoyl phosphate: step 3/3. In Campylobacter hominis (strain ATCC BAA-381 / DSM 21671 / CCUG 45161 / LMG 19568 / NCTC 13146 / CH001A), this protein is Argininosuccinate lyase.